Consider the following 8886-residue polypeptide: Obscurin (8886 aa).

4 Ig-like domains span residues 9–99, 109–201, 234–320, and 329–415; these read PRFL…LRVD, PHFL…LVVD, PPSP…QTYS, and PTVP…AELS. C30 and C81 form a disulfide bridge. Positions 135-165 are disordered; the sequence is SPQPAVSWSKDGRRLGPPDAPHVRVEEHGES. Positions 144-164 are enriched in basic and acidic residues; the sequence is KDGRRLGPPDAPHVRVEEHGE. Intrachain disulfides connect C257–C309 and C352–C402. Residue S393 is modified to Phosphoserine. A Fibronectin type-III 1 domain is found at 513 to 610; sequence PPADPVVKAK…FPGTMHLVPM (98 aa). Ig-like domains follow at residues 702–793, 859–951, 951–1043, 1043–1135, 1135–1227, 1227–1319, 1319–1407, 1411–1503, 1503–1595, 1595–1687, 1687–1779, 1779–1871, 1871–1963, 1963–2051, 2055–2147, 2152–2241, 2242–2325, 2329–2415, 2420–2504, 2598–2681, 2721–2812, 2900–2984, 3078–3162, 3258–3342, 3348–3431, 3527–3610, 3616–3700, 3785–3876, 3881–3964, 4042–4125, 4130–4213, 4219–4301, 4307–4389, 4395–4477, 4483–4565, 4571–4653, 4659–4741, 4746–4829, 4833–4916, 4923–5007, 5013–5105, 5378–5464, and 5557–5659; these read PSSK…QDIT, PKLV…VAEP, PKMV…VTEP, PKLV…VTEP, PKLV…FRLD, PKLA…VAEP, PKLM…VAEP, TRLM…VAEA, PERP…EEVA, AKFS…ARLT, PRVV…AALR, PVLF…AKLN, PVSF…ASLR, PVTL…QSIT, PVVL…AEVT, PVVF…SKVS, PVDI…AKLC, NRFT…ARLL, PSIF…SSIV, PVRF…ATLT, ATLT…ATLT, PAKF…ATLT, PTKF…ATLS, PSRF…ATLS, PRFI…ATLN, PRFI…AVLT, PKFT…ATLS, PRFI…ATLS, PAKF…ATLS, PQVV…TSAT, PVRF…ARLS, PKFK…PEVT, LEVL…ARLS, and PQMV…TFNV. Intrachain disulfides connect C885–C935, C977–C1027, C1069–C1119, C1161–C1211, C1253–C1303, C1345–C1395, C1437–C1487, C1529–C1579, C1621–C1671, C1713–C1763, C1805–C1855, C1897–C1947, C1989–C2039, and C2081–C2131. An intrachain disulfide couples C2263 to C2313. 8 disulfide bridges follow: C2620-C2669, C2743-C2793, C2922-C2972, C3100-C3150, C3280-C3330, C3369-C3419, C3549-C3599, and C3638-C3688. S3321 is subject to Phosphoserine. S3802 is subject to Phosphoserine. Cystine bridges form between C3815-C3864, C3903-C3952, C4064-C4113, C4152-C4201, C4240-C4289, C4328-C4377, C4416-C4465, C4504-C4553, C4592-C4641, C4680-C4729, C4768-C4817, C4856-C4906, C4945-C4995, and C5034-C5086. S4960 is subject to Phosphoserine. Positions 5471–5569 constitute a Fibronectin type-III 2 domain; sequence PPEDAEVVGR…VKIAPAPAPA (99 aa). Residues C5590 and C5643 are joined by a disulfide bond. S5699 carries the post-translational modification Phosphoserine. The segment at 5700-5736 is disordered; that stretch reads REPTLDSISELPEEDSRVQHLRQEAEETAPDLSEGYS. T5703 carries the post-translational modification Phosphothreonine. The residue at position 5706 (S5706) is a Phosphoserine. A compositionally biased stretch (basic and acidic residues) spans 5713-5724; the sequence is EDSRVQHLRQEA. T5737 is modified (phosphothreonine). Residue S5754 is modified to Phosphoserine. The region spanning 5821 to 5850 is the IQ domain; that stretch reads LDKAAVKIQAAFKGYKVRKEMKQQEGPVFS. In terms of domain architecture, Ig-like 48 spans 5847–5930; the sequence is PVFSRTFGDT…QVSTKSGRVS (84 aa). A disulfide bridge connects residues C5868 and C5920. The segment at 5977 to 5996 is disordered; it reads EEELFLSADEGPGEPEEPAD. Ig-like domains lie at 6077-6166, 6209-6298, and 6320-6416; these read PVFL…AELR, PQVL…ARLL, and PRIL…LHIS. A disulfide bridge links C6098 with C6150. The segment at 6504–6546 is disordered; it reads KLQVPGGDSDEETKTPSASPRHGRSRPSSSVQESSSESEDGDS. Phosphoserine is present on S6512. T6518 bears the Phosphothreonine mark. Residues 6519-6538 show a composition bias toward low complexity; it reads PSASPRHGRSRPSSSVQESS. A phosphoserine mark is found at S6520 and S6522. Positions 6549–6616 constitute an SH3 domain; that stretch reads EIFDIYVVTA…SPAYLDKRLK (68 aa). The DH domain maps to 6642 to 6826; that stretch reads RLSSVIQELL…SALPQRAENK (185 aa). The PH domain occupies 6844 to 6953; it reads EPIRQGHFIV…WVKEICGIQQ (110 aa). R6924 contributes to the a 1,2-diacyl-sn-glycero-3-phospho-(1D-myo-inositol-4,5-bisphosphate) binding site. R6929 provides a ligand contact to a 1,2-diacyl-sn-glycero-3-phospho-(1D-myo-inositol-3,4-bisphosphate). 2 consecutive Ig-like domains span residues 6963-7046 and 7057-7147; these read PEFE…GNAS and PRFV…GELY. Cystine bridges form between C6984–C7036 and C7078–C7131. The interval 7200 to 7257 is disordered; it reads ALGPSPGDLPNTRQSEPPAFEEAASQIPGAASGTPEVSQPGTHKGLEQETTSSGSQGW. Residues 7247 to 7257 show a composition bias toward polar residues; sequence QETTSSGSQGW. The Ig-like 54 domain occupies 7306-7394; the sequence is PSMQVTIEDV…GQVLCKAELL (89 aa). Residues 7416 to 7669 enclose the Protein kinase 1 domain; sequence YDVQEEIGRG…TSQCLAHPWF (254 aa). Residues 7422-7430 and K7445 each bind ATP; that span reads IGRGVFGFV. D7535 (proton acceptor) is an active-site residue. 3 disordered regions span residues 7717–7810, 7879–8106, and 8150–8180; these read GPPD…SPGC, EQAS…TTRK, and SSEE…VPLR. The residue at position 7779 (S7779) is a Phosphoserine. Positions 7793–7804 are enriched in low complexity; sequence AAVPASPQSAGP. Positions 7941 to 7952 are enriched in basic and acidic residues; that stretch reads TTAKDRGHKEGF. Residues 7986-7996 are compositionally biased toward polar residues; sequence SCHSELGSGSQ. 2 stretches are compositionally biased toward low complexity: residues 8000–8014 and 8053–8073; these read GPPS…PPQS and GSLS…ASQV. A Phosphoserine modification is found at S8161. Residues 8380–8464 enclose the Ig-like 55 domain; sequence KGRDQELSDE…VSNPLGTAVT (85 aa). The cysteines at positions 8401 and 8453 are disulfide-linked. Residues 8474-8566 enclose the Fibronectin type-III 3 domain; the sequence is PSSSPRPEVG…PSEQVLLGGP (93 aa). The Protein kinase 2 domain occupies 8590–8842; it reads FAFQMQIRRG…ASTCLQCGWL (253 aa). Residues 8596-8604 and K8619 each bind ATP; that span reads IRRGRFSVV. D8709 acts as the Proton acceptor in catalysis.

This sequence belongs to the protein kinase superfamily. CAMK Ser/Thr protein kinase family. As to quaternary structure, interacts (via protein kinase domain 1) with CDH2 and (via protein kinase domain 1) with ATP1B1. Isoform 2 is found in a complex with DSG2, DESM, GJA1, CDH2 and VCL. Isoform 3 is found in a complex with DSG2, DESM, GJA1, CDH2, ANK3 and VCL. The cofactor is Mg(2+). Post-translationally, autophosphorylated by protein kinase domain 1 and 2. Two small isoforms, one probably containing protein kinase domain 2 and a partial protein kinase domain 1 and one containing only protein kinase domain 2, are glycosylated. As to expression, expressed in skeletal muscles including flexor digitorum brevis (FDB), soleus and tibialis anterior muscles, and to a lesser extent in heart muscles (at protein level). Isoform 2 and isoform 3 are expressed in the myocardium (at protein level).

It localises to the cytoplasm. It is found in the myofibril. The protein resides in the sarcomere. Its subcellular location is the m line. The protein localises to the z line. It localises to the cell membrane. It is found in the sarcolemma. The protein resides in the nucleus. Its subcellular location is the secreted. It catalyses the reaction L-seryl-[protein] + ATP = O-phospho-L-seryl-[protein] + ADP + H(+). It carries out the reaction L-threonyl-[protein] + ATP = O-phospho-L-threonyl-[protein] + ADP + H(+). Its function is as follows. Structural component of striated muscles which plays a role in myofibrillogenesis. Probably involved in the assembly of myosin into sarcomeric A bands in striated muscle. Has serine/threonine protein kinase activity and phosphorylates N-cadherin CDH2 and sodium/potassium-transporting ATPase subunit ATP1B1. Binds (via the PH domain) strongly to phosphatidylinositol 3,4-bisphosphate (PtdIns(3,4)P2) and phosphatidylinositol 4,5-bisphosphate (PtdIns(4,5)P2), and to a lesser extent to phosphatidylinositol 3-phosphate (PtdIns(3)P), phosphatidylinositol 4-phosphate (PtdIns(4)P), phosphatidylinositol 5-phosphate (PtdIns(5)P) and phosphatidylinositol 3,4,5-trisphosphate (PtdIns(3,4,5)P3). In terms of biological role, isoform 2 and isoform 3: bind phosphatidylinositol bisphosphates (PIP2s) via their PH domains and negatively regulate the PI3K/AKT/mTOR signaling pathway, thus contributing to the regulation of cardiomyocyte size and adhesion. This chain is Obscurin, found in Mus musculus (Mouse).